We begin with the raw amino-acid sequence, 371 residues long: MKVGFVGWRGMVGSVLMQRMKEENDFAHIPEAFFFTTSNVGGAAPDFGQAAKTLLDANDVAELAKMDIIVTCQGGDYTKSVFQPLRDSGWNGYWVDAASSLRMKDDAIIVLDPVNRNVIDNGLKNGVKNYIGGNCTVSLMLMALGGLFQNDLVEWATSMTYQAASGAGAKNMRELISGMGAIHAKVADELADPSSAILDIDRKVSDFLRSEDYPKANFGVPLAGSLIPWIDVDLGNGQSKEEWKGGVETNKILGRSDNPTVIDGLCVRIGSMRCHSQALTLKLKKDLPVSEIEAILAGANDWVKVIPNEKEASIHELTPAKVTGTLSVPVGRIRKLEMGGEYISAFTVGDQLLWGAAEPLRRVLRIVLGSL.

NADP(+) contacts are provided by residues 9–12 (RGMV), 37–38 (TS), and Gln73. Phosphate is bound at residue Arg102. Catalysis depends on Cys135, which acts as the Acyl-thioester intermediate. A substrate-binding site is contributed by Gln162. NADP(+)-binding positions include 165-166 (SG) and Pro193. Glu241 is a substrate binding site. Residue Lys244 participates in phosphate binding. Substrate is bound at residue Arg268. The active-site Proton acceptor is His275. Gln351 contacts NADP(+).

It belongs to the aspartate-semialdehyde dehydrogenase family. As to quaternary structure, homodimer.

The catalysed reaction is L-aspartate 4-semialdehyde + phosphate + NADP(+) = 4-phospho-L-aspartate + NADPH + H(+). It participates in amino-acid biosynthesis; L-lysine biosynthesis via DAP pathway; (S)-tetrahydrodipicolinate from L-aspartate: step 2/4. Its pathway is amino-acid biosynthesis; L-methionine biosynthesis via de novo pathway; L-homoserine from L-aspartate: step 2/3. The protein operates within amino-acid biosynthesis; L-threonine biosynthesis; L-threonine from L-aspartate: step 2/5. Functionally, catalyzes the NADPH-dependent formation of L-aspartate-semialdehyde (L-ASA) by the reductive dephosphorylation of L-aspartyl-4-phosphate. In Neisseria meningitidis serogroup A / serotype 4A (strain DSM 15465 / Z2491), this protein is Aspartate-semialdehyde dehydrogenase.